Reading from the N-terminus, the 150-residue chain is Transcription antitermination protein NusB (150 aa).

Belongs to the NusB family.

In terms of biological role, involved in transcription antitermination. Required for transcription of ribosomal RNA (rRNA) genes. Binds specifically to the boxA antiterminator sequence of the ribosomal RNA (rrn) operons. In Chloroflexus aggregans (strain MD-66 / DSM 9485), this protein is Transcription antitermination protein NusB.